The following is a 92-amino-acid chain: C-C motif chemokine 5 (92 aa).

The signal sequence occupies residues 1–23 (MKVSTAAFAVLLTAAAFCTPASA). Intrachain disulfides connect cysteine 33-cysteine 57 and cysteine 34-cysteine 73.

This sequence belongs to the intercrine beta (chemokine CC) family.

Its subcellular location is the secreted. Chemoattractant for blood monocytes, memory T-helper cells and eosinophils. Causes the release of histamine from basophils and activates eosinophils. May activate several chemokine receptors including CCR1, CCR3, CCR4 and CCR5. May also be an agonist of the G protein-coupled receptor GPR75. Together with GPR75, may play a role in neuron survival through activation of a downstream signaling pathway involving the PI3, Akt and MAP kinases. By activating GPR75 may also play a role in insulin secretion by islet cells. The protein is C-C motif chemokine 5 (CCL5) of Felis catus (Cat).